We begin with the raw amino-acid sequence, 328 residues long: Type II secretion system protein K (328 aa).

The propeptide at 1-7 is leader sequence; sequence MRSRQRG. Residues 8–28 form a helical membrane-spanning segment; the sequence is AALLVVLLILALMVTIAAVIT. Residues 29–328 are Periplasmic-facing; sequence ERTGKAFLRT…QYGGYRTVNP (300 aa).

It belongs to the GSP K family. As to quaternary structure, type II secretion is composed of four main components: the outer membrane complex, the inner membrane complex, the cytoplasmic secretion ATPase and the periplasm-spanning pseudopilus. Interacts with core component OutG. Cleaved by prepilin peptidase.

The protein resides in the cell inner membrane. Component of the type II secretion system required for the energy-dependent secretion of extracellular factors such as proteases and toxins from the periplasm. Plays a role in pseudopilus assembly and seems to control its length. Interacts with the pseudopilus tip complex that is critical for the recognition and binding of secretion substrates. This is Type II secretion system protein K (outK) from Pectobacterium carotovorum subsp. carotovorum (Erwinia carotovora subsp. carotovora).